A 329-amino-acid chain; its full sequence is Fructose-1,6-bisphosphatase class 1 (329 aa).

Glutamate 84, aspartate 103, leucine 105, and aspartate 106 together coordinate Mg(2+). Substrate contacts are provided by residues 106-109 (DGSS), asparagine 196, and lysine 262. Glutamate 268 provides a ligand contact to Mg(2+).

Belongs to the FBPase class 1 family. In terms of assembly, homotetramer. Mg(2+) serves as cofactor.

Its subcellular location is the cytoplasm. It carries out the reaction beta-D-fructose 1,6-bisphosphate + H2O = beta-D-fructose 6-phosphate + phosphate. Its pathway is carbohydrate biosynthesis; gluconeogenesis. The protein is Fructose-1,6-bisphosphatase class 1 of Shewanella woodyi (strain ATCC 51908 / MS32).